Consider the following 604-residue polypeptide: Prostaglandin G/H synthase 2 (604 aa).

The signal sequence occupies residues 1–17 (MLFRAVLLCAALGLSQA). The region spanning 18–55 (ANPCCSNPCQNRGECMSTGFDQYKCDCTRTGFYGENCT) is the EGF-like domain. 4 cysteine pairs are disulfide-bonded: C21–C32, C22–C145, C26–C42, and C44–C54. N53 carries N-linked (GlcNAc...) asparagine glycosylation. R106 contributes to the substrate binding site. N-linked (GlcNAc...) asparagine glycosylation is present at N130. H193 serves as the catalytic Proton acceptor. Y341 provides a ligand contact to substrate. Y371 (for cyclooxygenase activity) is an active-site residue. H374 provides a ligand contact to heme b. A glycan (N-linked (GlcNAc...) asparagine) is linked at N396. C526 bears the S-nitrosocysteine mark. C555 and C561 are joined by a disulfide. S565 carries the post-translational modification O-acetylserine; by SPHK1. N-linked (GlcNAc...) asparagine glycosylation is present at N580.

The protein belongs to the prostaglandin G/H synthase family. In terms of assembly, homodimer. Heme b is required as a cofactor. In terms of processing, S-nitrosylation by NOS2 (iNOS) activates enzyme activity. S-nitrosylation may take place on different Cys residues in addition to Cys-526. Acetylated at Ser-565 by SPHK1. During neuroinflammation, acetylation by SPHK1 promotes neuronal secretion of specialized preresolving mediators (SPMs), especially 15-R-lipoxin A4, which results in an increase of phagocytic microglia. Following colon injury, expressed in the wound bed mesenchyme during the first phase of repair, probably by colonic mesenchymal stem cells (at protein level).

It is found in the microsome membrane. It localises to the endoplasmic reticulum membrane. The protein localises to the nucleus inner membrane. Its subcellular location is the nucleus outer membrane. The enzyme catalyses (5Z,8Z,11Z,14Z)-eicosatetraenoate + AH2 + 2 O2 = prostaglandin H2 + A + H2O. It carries out the reaction (5Z,8Z,11Z,14Z)-eicosatetraenoate + 2 O2 = prostaglandin G2. It catalyses the reaction prostaglandin G2 + AH2 = prostaglandin H2 + A + H2O. The catalysed reaction is (5Z,8Z,11Z,14Z,17Z)-eicosapentaenoate + 2 O2 = prostaglandin G3. The enzyme catalyses prostaglandin G3 + AH2 = prostaglandin H3 + A + H2O. It carries out the reaction (8Z,11Z,14Z)-eicosatrienoate + 2 O2 = prostaglandin G1. It catalyses the reaction prostaglandin G1 + AH2 = prostaglandin H1 + A + H2O. The catalysed reaction is 2-(5Z,8Z,11Z,14Z)-eicosatetraenoyl-sn-glycero-3-phosphoethanolamine + 2 O2 = 2-(prostaglandin G2)-sn-glycero-3-phosphoethanolamine. The enzyme catalyses 2-(prostaglandin G2)-sn-glycero-3-phosphoethanolamine + AH2 = 2-(prostaglandin H2)-sn-glycero-3-phosphoethanolamine + A + H2O. It carries out the reaction 2-(5Z,8Z,11Z,14Z)-eicosatetraenoyl-sn-glycero-3-phosphocholine + 2 O2 = 2-(prostaglandin G2)-sn-glycero-3-phosphocholine. It catalyses the reaction 2-(prostaglandin G2)-sn-glycero-3-phosphocholine + AH2 = 2-(prostaglandin H2)-sn-glycero-3-phosphocholine + A + H2O. The catalysed reaction is (15S)-hydroperoxy-(5Z,8Z,11Z,13E)-eicosatetraenoate + AH2 = (15S)-hydroxy-(5Z,8Z,11Z,13E)-eicosatetraenoate + A + H2O. The enzyme catalyses 2-(5Z,8Z,11Z,14Z)-eicosatetraenoyl-sn-glycero-3-phosphocholine + AH2 + O2 = 2-[(15S)-hydroxy-(5Z,8Z,11Z,13E)-eicosatetraenoyl]-sn-glycero-3-phosphocholine + A + H2O. It carries out the reaction 2-(5Z,8Z,11Z,14Z)-eicosatetraenoyl-sn-glycero-3-phosphocholine + AH2 + O2 = 2-[(15R)-hydroxy-(5Z,8Z,11Z,13E)-eicosatetraenoyl]-sn-glycero-3-phosphocholine + A + H2O. It catalyses the reaction 2-(5Z,8Z,11Z,14Z)-eicosatetraenoyl-sn-glycero-3-phosphocholine + AH2 + O2 = 2-[(11R)-hydroxy-(5Z,8Z,12E,14Z)-eicosatetraenoyl]-sn-glycero-3-phosphocholine + A + H2O. The catalysed reaction is (9Z,12Z)-octadecadienoate + AH2 + O2 = 9-hydroxy-(10E,12Z)-octadecadienoate + A + H2O. The enzyme catalyses (9Z,12Z)-octadecadienoate + AH2 + O2 = 13-hydroxy-(9Z,11E)-octadecadienoate + A + H2O. It carries out the reaction (5Z,8Z,11Z,14Z)-eicosatetraenoate + AH2 + O2 = (15R)-hydroxy-(5Z,8Z,11Z,13E)-eicosatetraenoate + A + H2O. It catalyses the reaction (5Z,8Z,11Z,14Z)-eicosatetraenoate + AH2 + O2 = (11R)-hydroxy-(5Z,8Z,12E,14Z)-eicosatetraenoate + A + H2O. The catalysed reaction is (5Z,8Z,11Z,14Z,17Z)-eicosapentaenoate + AH2 + O2 = (11R)-hydroxy-(5Z,8Z,12E,14Z,17Z)-eicosapentaenoate + A + H2O. The enzyme catalyses (5Z,8Z,11Z,14Z,17Z)-eicosapentaenoate + AH2 + O2 = (18S)-hydroxy-(5Z,8Z,11Z,14Z,16E)-eicosapentaenoate + A + H2O. It carries out the reaction (5Z,8Z,11Z,14Z,17Z)-eicosapentaenoate + AH2 + O2 = (18R)-hydroxy-(5Z,8Z,11Z,14Z,16E)-eicosapentaenoate + A + H2O. It catalyses the reaction (5Z,8Z,11Z,14Z,17Z)-eicosapentaenoate + AH2 + O2 = (15R)-hydroxy-(5Z,8Z,11Z,13E,17Z)-eicosapentaenoate + A + H2O. The catalysed reaction is (5Z,8Z,11Z,14Z,17Z)-eicosapentaenoate + AH2 + O2 = (15S)-hydroxy-(5Z,8Z,11Z,13E,17Z)-eicosapentaenoate + A + H2O. The enzyme catalyses (7Z,10Z,13Z,16Z,19Z)-docosapentaenoate + AH2 + O2 = 13R-hydroxy-(7Z,10Z,14E,16Z,19Z)-docosapentaenoate + A + H2O. It carries out the reaction (4Z,7Z,10Z,13Z,16Z,19Z)-docosahexaenoate + AH2 + O2 = 13-hydroxy-(4Z,7Z,10Z,14E,16Z,19Z)-docosahexaenoate + A + H2O. It catalyses the reaction (5S)-hydroxy-(6E,8Z,11Z,14Z)-eicosatetraenoate + AH2 + O2 = (5S,15R)-dihydroxy-(6E,8Z,11Z,13E)-eicosatetraenoate + A + H2O. The catalysed reaction is (4Z,7Z,10Z,13Z,16Z,19Z)-docosahexaenoate + AH2 + O2 = 17R-hydroxy-(4Z,7Z,10Z,13Z,15E,19Z)-docosahexaenoate + A + H2O. The enzyme catalyses (5S)-hydroxy-(6E,8Z,11Z,14Z)-eicosatetraenoate + AH2 + O2 = (5S,15S)-dihydroxy-(6E,8Z,11Z,13E)-eicosatetraenoate + A + H2O. It carries out the reaction (5S)-hydroxy-(6E,8Z,11Z,14Z)-eicosatetraenoate + AH2 + O2 = (5S,11R)-dihydroxy-(6E,8Z,12E,14Z)-eicosatetraenoate + A + H2O. It catalyses the reaction 2-(5Z,8Z,11Z,14Z-eicosatetraenoyl)-glycerol + 2 O2 = 2-glyceryl-prostaglandin G2. The catalysed reaction is 2-glyceryl-prostaglandin G2 + AH2 = 2-glyceryl-prostaglandin H2 + A + H2O. The enzyme catalyses (5Z,8Z,11Z,14Z)-eicosatetraenoate + O2 = (15R)-hydroperoxy-(5Z,8Z,11Z,13E)-eicosatetraenoate. It carries out the reaction (5Z,8Z,11Z,14Z)-eicosatetraenoate + O2 = 11R-hydroperoxy-(5Z,8Z,12E,14Z)-eicosatetraenoate. It catalyses the reaction (9Z,12Z)-octadecadienoate + AH2 + O2 = (9R)-hydroxy-(10E,12Z)-octadecadienoate + A + H2O. The catalysed reaction is (9Z,12Z)-octadecadienoate + AH2 + O2 = (9S)-hydroxy-(10E,12Z)-octadecadienoate + A + H2O. The enzyme catalyses (9Z,12Z)-octadecadienoate + AH2 + O2 = (13S)-hydroxy-(9Z,11E)-octadecadienoate + A + H2O. It carries out the reaction (9Z,12Z)-octadecadienoate + AH2 + O2 = (13R)-hydroxy-(9Z,11E)-octadecadienoate + A + H2O. Its pathway is lipid metabolism; prostaglandin biosynthesis. With respect to regulation, inhibited by the nonsteroidal anti-inflammatory drugs aspirin, naproxen, diclofenac, meclofenamic acid, indomethacin and their analogs. Its function is as follows. Dual cyclooxygenase and peroxidase in the biosynthesis pathway of prostanoids, a class of C20 oxylipins mainly derived from arachidonate, with a particular role in the inflammatory response. The cyclooxygenase activity oxygenates arachidonate (AA, C20:4(n-6)) to the hydroperoxy endoperoxide prostaglandin G2 (PGG2), and the peroxidase activity reduces PGG2 to the hydroxy endoperoxide PGH2, the precursor of all 2-series prostaglandins and thromboxanes. This complex transformation is initiated by abstraction of hydrogen at carbon 13 (with S-stereochemistry), followed by insertion of molecular O2 to form the endoperoxide bridge between carbon 9 and 11 that defines prostaglandins. The insertion of a second molecule of O2 (bis-oxygenase activity) yields a hydroperoxy group in PGG2 that is then reduced to PGH2 by two electrons. Similarly catalyzes successive cyclooxygenation and peroxidation of dihomo-gamma-linoleate (DGLA, C20:3(n-6)) and eicosapentaenoate (EPA, C20:5(n-3)) to corresponding PGH1 and PGH3, the precursors of 1- and 3-series prostaglandins. In an alternative pathway of prostanoid biosynthesis, converts 2-arachidonoyl lysophopholipids to prostanoid lysophopholipids, which are then hydrolyzed by intracellular phospholipases to release free prostanoids. Metabolizes 2-arachidonoyl glycerol yielding the glyceryl ester of PGH2, a process that can contribute to pain response. Generates lipid mediators from n-3 and n-6 polyunsaturated fatty acids (PUFAs) via a lipoxygenase-type mechanism. Oxygenates PUFAs to hydroperoxy compounds and then reduces them to corresponding alcohols. Plays a role in the generation of resolution phase interaction products (resolvins) during both sterile and infectious inflammation. Metabolizes docosahexaenoate (DHA, C22:6(n-3)) to 17R-HDHA, a precursor of the D-series resolvins (RvDs). As a component of the biosynthetic pathway of E-series resolvins (RvEs), converts eicosapentaenoate (EPA, C20:5(n-3)) primarily to 18S-HEPE that is further metabolized by ALOX5 and LTA4H to generate 18S-RvE1 and 18S-RvE2. In vascular endothelial cells, converts docosapentaenoate (DPA, C22:5(n-3)) to 13R-HDPA, a precursor for 13-series resolvins (RvTs) shown to activate macrophage phagocytosis during bacterial infection. In activated leukocytes, contributes to oxygenation of hydroxyeicosatetraenoates (HETE) to diHETES (5,15-diHETE and 5,11-diHETE). Can also use linoleate (LA, (9Z,12Z)-octadecadienoate, C18:2(n-6)) as substrate and produce hydroxyoctadecadienoates (HODEs) in a regio- and stereospecific manner, being (9R)-HODE ((9R)-hydroxy-(10E,12Z)-octadecadienoate) and (13S)-HODE ((13S)-hydroxy-(9Z,11E)-octadecadienoate) its major products. During neuroinflammation, plays a role in neuronal secretion of specialized preresolving mediators (SPMs) 15R-lipoxin A4 that regulates phagocytic microglia. The protein is Prostaglandin G/H synthase 2 of Mus musculus (Mouse).